The following is an 80-amino-acid chain: Cytochrome c oxidase subunit 7B, mitochondrial (80 aa).

The transit peptide at 1 to 24 (MLPLAKNALSRLQVRSIQQVVARQ) directs the protein to the mitochondrion. Residues 25 to 39 (SHQKRAPSFHDKYGN) lie on the Mitochondrial matrix side of the membrane. The chain crosses the membrane as a helical span at residues 40–60 (AILAGGAIFCVSTWTYTATQI). The Mitochondrial intermembrane portion of the chain corresponds to 61–80 (GIEWNMSPVGRVTPKEWRDQ).

It belongs to the cytochrome c oxidase VIIb family. Component of the cytochrome c oxidase (complex IV, CIV), a multisubunit enzyme composed of 14 subunits. The complex is composed of a catalytic core of 3 subunits MT-CO1, MT-CO2 and MT-CO3, encoded in the mitochondrial DNA, and 11 supernumerary subunits COX4I, COX5A, COX5B, COX6A, COX6B, COX6C, COX7A, COX7B, COX7C, COX8 and NDUFA4, which are encoded in the nuclear genome. The complex exists as a monomer or a dimer and forms supercomplexes (SCs) in the inner mitochondrial membrane with NADH-ubiquinone oxidoreductase (complex I, CI) and ubiquinol-cytochrome c oxidoreductase (cytochrome b-c1 complex, complex III, CIII), resulting in different assemblies (supercomplex SCI(1)III(2)IV(1) and megacomplex MCI(2)III(2)IV(2)).

The protein resides in the mitochondrion inner membrane. Its pathway is energy metabolism; oxidative phosphorylation. Component of the cytochrome c oxidase, the last enzyme in the mitochondrial electron transport chain which drives oxidative phosphorylation. The respiratory chain contains 3 multisubunit complexes succinate dehydrogenase (complex II, CII), ubiquinol-cytochrome c oxidoreductase (cytochrome b-c1 complex, complex III, CIII) and cytochrome c oxidase (complex IV, CIV), that cooperate to transfer electrons derived from NADH and succinate to molecular oxygen, creating an electrochemical gradient over the inner membrane that drives transmembrane transport and the ATP synthase. Cytochrome c oxidase is the component of the respiratory chain that catalyzes the reduction of oxygen to water. Electrons originating from reduced cytochrome c in the intermembrane space (IMS) are transferred via the dinuclear copper A center (CU(A)) of subunit 2 and heme A of subunit 1 to the active site in subunit 1, a binuclear center (BNC) formed by heme A3 and copper B (CU(B)). The BNC reduces molecular oxygen to 2 water molecules using 4 electrons from cytochrome c in the IMS and 4 protons from the mitochondrial matrix. Plays a role in proper central nervous system (CNS) development in vertebrates. In Mus musculus (Mouse), this protein is Cytochrome c oxidase subunit 7B, mitochondrial (Cox7b).